Here is a 335-residue protein sequence, read N- to C-terminus: Fructose-1,6-bisphosphatase class 1 (335 aa).

Residues glutamate 92, aspartate 114, leucine 116, and aspartate 117 each coordinate Mg(2+). Substrate-binding positions include 117 to 120 (DGSS), asparagine 210, tyrosine 242, and lysine 274. Glutamate 280 serves as a coordination point for Mg(2+).

The protein belongs to the FBPase class 1 family. Homotetramer. It depends on Mg(2+) as a cofactor.

Its subcellular location is the cytoplasm. The enzyme catalyses beta-D-fructose 1,6-bisphosphate + H2O = beta-D-fructose 6-phosphate + phosphate. It functions in the pathway carbohydrate biosynthesis; gluconeogenesis. This chain is Fructose-1,6-bisphosphatase class 1, found in Lawsonia intracellularis (strain PHE/MN1-00).